The sequence spans 998 residues: Probable protein kinase DDB_G0277539 (998 aa).

Disordered regions lie at residues 1–34 (MDFPSQSEKKKYITKKRTTLFSYDDDDDDDDFDQ), 65–207 (CEDQ…TNEF), 265–284 (INNNYNNNNNNEEDQIFSSS), 316–367 (SNGS…NYSS), 380–420 (ERTN…PNSI), and 435–489 (RLQS…NNNN). The span at 23–32 (YDDDDDDDDF) shows a compositional bias: acidic residues. Residues 70-139 (QQQQQQSSSP…NNNNNNNNNN (70 aa)) are compositionally biased toward low complexity. Basic residues predominate over residues 140–150 (SHHHHLRKGRR). Positions 166–177 (ASLSSTKTNMFP) are enriched in polar residues. Low complexity-rich tracts occupy residues 184–203 (SSPSSQQQQQQQQQQSQSQQ) and 265–274 (INNNYNNNNN). The segment covering 316–328 (SNGSYNKGNTFPS) has biased composition (polar residues). The span at 330–340 (EVKRVRPDQRA) shows a compositional bias: basic and acidic residues. Low complexity-rich tracts occupy residues 393 to 415 (NVNNNNNNNANNNNVNNNNNNNN) and 450 to 489 (NNNNNNNNASNNNNDNNNNNNNNNNNNNNNDDTCNNNNNN). Residues 508–849 (FQELDLIGEG…AEQLLEHPLI (342 aa)) form the Protein kinase domain. Residues 514 to 522 (IGEGSFGHV) and Lys-537 each bind ATP. Asp-631 serves as the catalytic Proton acceptor. 2 residues coordinate Mg(2+): Asn-636 and Glu-677.

It belongs to the protein kinase superfamily. Ser/Thr protein kinase family. WEE1 subfamily.

It carries out the reaction L-seryl-[protein] + ATP = O-phospho-L-seryl-[protein] + ADP + H(+). It catalyses the reaction L-threonyl-[protein] + ATP = O-phospho-L-threonyl-[protein] + ADP + H(+). This is Probable protein kinase DDB_G0277539 from Dictyostelium discoideum (Social amoeba).